A 353-amino-acid chain; its full sequence is RNA 3'-terminal phosphate cyclase (353 aa).

ATP is bound by residues Q103 and 297-301 (HLADQ). Catalysis depends on H322, which acts as the Tele-AMP-histidine intermediate.

It belongs to the RNA 3'-terminal cyclase family. Type 1 subfamily.

It is found in the cytoplasm. The catalysed reaction is a 3'-end 3'-phospho-ribonucleotide-RNA + ATP = a 3'-end 2',3'-cyclophospho-ribonucleotide-RNA + AMP + diphosphate. Functionally, catalyzes the conversion of 3'-phosphate to a 2',3'-cyclic phosphodiester at the end of RNA. The mechanism of action of the enzyme occurs in 3 steps: (A) adenylation of the enzyme by ATP; (B) transfer of adenylate to an RNA-N3'P to produce RNA-N3'PP5'A; (C) and attack of the adjacent 2'-hydroxyl on the 3'-phosphorus in the diester linkage to produce the cyclic end product. The biological role of this enzyme is unknown but it is likely to function in some aspects of cellular RNA processing. The chain is RNA 3'-terminal phosphate cyclase from Salmonella heidelberg (strain SL476).